The sequence spans 486 residues: Galactose-1-phosphate uridylyltransferase (486 aa).

This sequence belongs to the galactose-1-phosphate uridylyltransferase type 2 family.

The protein resides in the cytoplasm. It catalyses the reaction alpha-D-galactose 1-phosphate + UDP-alpha-D-glucose = alpha-D-glucose 1-phosphate + UDP-alpha-D-galactose. Its pathway is carbohydrate metabolism; galactose metabolism. The polypeptide is Galactose-1-phosphate uridylyltransferase (Lacticaseibacillus casei (Lactobacillus casei)).